Consider the following 270-residue polypeptide: Cbp/p300-interacting transactivator 2 (270 aa).

The segment at 138-201 (LHPAAGHQMN…SGGGSGSGNM (64 aa)) is disordered. A compositionally biased stretch (gly residues) spans 165 to 198 (STPGGSGGSSTPGGSGSSSGGGAGSSNSGGGSGS).

Belongs to the CITED family. Interacts (via C-terminus) with SMAD2. Interacts (via C-terminus) with SMAD3 (via MH2 domain). Interacts with LHX2 (via LIM domains). Interacts with WT1. Interacts (via C-terminus) with EP300 (via CH1 domain); the interaction is stimulated in response to hypoxia. Interacts with PPARA. Interacts (via C-terminus) with TFAP2A, TFAP2B and TFAP2C.

It is found in the nucleus. In terms of biological role, transcriptional coactivator of the p300/CBP-mediated transcription complex. Acts as a bridge, linking TFAP2 transcription factors and the p300/CBP transcriptional coactivator complex in order to stimulate TFAP2-mediated transcriptional activation. Positively regulates TGF-beta signaling through its association with the SMAD/p300/CBP-mediated transcriptional coactivator complex. Stimulates the peroxisome proliferator-activated receptors PPARA transcriptional activity. Enhances estrogen-dependent transactivation mediated by estrogen receptors. Also acts as a transcriptional corepressor; interferes with the binding of the transcription factors HIF1A or STAT2 and the p300/CBP transcriptional coactivator complex. Participates in sex determination and early gonad development by stimulating transcription activation of SRY. Plays a role in controlling left-right patterning during embryogenesis; potentiates transcriptional activation of NODAL-mediated gene transcription in the left lateral plate mesoderm (LPM). Plays an essential role in differentiation of the adrenal cortex from the adrenogonadal primordium (AGP); stimulates WT1-mediated transcription activation thereby up-regulating the nuclear hormone receptor NR5A1 promoter activity. Associates with chromatin to the PITX2 P1 promoter region. This Homo sapiens (Human) protein is Cbp/p300-interacting transactivator 2 (CITED2).